The primary structure comprises 506 residues: Maturase K (506 aa).

This sequence belongs to the intron maturase 2 family. MatK subfamily.

Its subcellular location is the plastid. It is found in the chloroplast. Its function is as follows. Usually encoded in the trnK tRNA gene intron. Probably assists in splicing its own and other chloroplast group II introns. This is Maturase K from Trifolium microcephalum (Small-head clover).